We begin with the raw amino-acid sequence, 1048 residues long: MSWLRTSPLRQSLTRNSGSSGSGNSSATTTLRQRPIDAATDCDPRACYDSFCKHWQQAHEIIQHPGPPTHDDVLGVVSHLDYMVTLLLVELHHCNKVSLPTADSAPPAAPCLEYLLSENLLDKLYEWASTTGRYANAVRLEQLKLYELLVSHSRHQLLCHEPFLRPLLKILASSQGEIFPPDLEKRLVILLNQLCVVLMQNVHLLDLFFFSAQTQVQEQIQNGSLAAPKSGTTTNFIIFSLLIPYVHREGSLGHQARDALLLCMALSQKNSNIGHYIAQYSSICPLLVTGLGGLYSRLPNSIEISSIDWHRITPDDVTEIPELTLFMNALEFCNAVVQVAHEMIKQQLLDFMYQGFIVPVLGPAILQTNIDSQISAMSYLDLILRSITEPGLMRAFVKFLLDTEKFDGERILDALVERLHSPDANLCMVTMALFDTLLGLHCEDLMLELLLKYLLPGKHVPISHRHKINKIDPYLNTTEFFLDLTPDVMKRARDLARPKSVQDQVDPAAATAPLAVMLPSLPSPVMSKTIGANWNYYGHYTGDSLYANVQAYLFEAHSRIAQCQRDCAKWANSYRYQKWPRQGQARANAHALELAKQFFSEFASAAPMAAAGTSDLGEKQLDSLQSIGESSGYESFKWRPADEDAEGIDVTTTTATSDTDLEHNNSSSIGSGRRDSWRISHSTRNELLLTDLDFSEDLFAQGTVSLGPFLNAIWSKLQTFTSNSLYVNLHLTGLITRLAWYPLPLIHSLLLRSDIAITSDTPSFHQVLRMLKQQIDAELPVAENSLEIIDVARSYLIDREFRLVNARKITDNAPMHQQHQQQQLQHTTNPTQQQQAQQRSTYATLSAATPVQASPTSAYDPFRRSDNKRRSISKSISSMFSRRSTSSTAATNTNTASSGLSQIYAFFTGAASTLVGGNNGEVSARGAAQEQSRGNTCETSLSTAPRQEAQTAVVSSSNSSIGGSTQTLSATHSSSTLHGVESGLQTGSFNSEPVSLDSVASMGIIANTSGTERSRDLALCAVLLDEWLKELAAIALEQSVVLVTEQLL.

Residues 1–15 (MSWLRTSPLRQSLTR) show a composition bias toward polar residues. The segment at 1–32 (MSWLRTSPLRQSLTRNSGSSGSGNSSATTTLR) is disordered. A compositionally biased stretch (low complexity) spans 16 to 26 (NSGSSGSGNSS). Residue S500 is modified to Phosphoserine. Disordered stretches follow at residues 652 to 675 (TTTA…GRRD), 813 to 871 (APMH…KRRS), and 924 to 984 (ARGA…ESGL). Positions 816–838 (HQQHQQQQLQHTTNPTQQQQAQQ) are enriched in low complexity. Polar residues-rich tracts occupy residues 839–857 (RSTY…SPTS) and 929–954 (QEQS…TAVV). A compositionally biased stretch (low complexity) spans 955–978 (SSSNSSIGGSTQTLSATHSSSTLH).

It belongs to the FHIP family.

The sequence is that of FHIP family protein GJ17503 from Drosophila virilis (Fruit fly).